Consider the following 359-residue polypeptide: 3-dehydroquinate synthase (359 aa).

NAD(+)-binding positions include 70-75, 105-109, 129-130, K142, K151, and 169-172; these read DGEQYK, GVIGD, TT, and FYKT. Residues E184, H247, and H264 each contribute to the Zn(2+) site.

The protein belongs to the sugar phosphate cyclases superfamily. Dehydroquinate synthase family. The cofactor is Co(2+). Requires Zn(2+) as cofactor. NAD(+) serves as cofactor.

It is found in the cytoplasm. The catalysed reaction is 7-phospho-2-dehydro-3-deoxy-D-arabino-heptonate = 3-dehydroquinate + phosphate. The protein operates within metabolic intermediate biosynthesis; chorismate biosynthesis; chorismate from D-erythrose 4-phosphate and phosphoenolpyruvate: step 2/7. In terms of biological role, catalyzes the conversion of 3-deoxy-D-arabino-heptulosonate 7-phosphate (DAHP) to dehydroquinate (DHQ). This chain is 3-dehydroquinate synthase, found in Francisella tularensis subsp. mediasiatica (strain FSC147).